The sequence spans 204 residues: MSDLRITEAFLYMDYLCFRALCCKGPPPARPEYDLVCIGLTGSGKTSLLSKLCSESPDNVVSTTGFSIKAVPFQNAILNVKELGGADNIRKYWSRYYQGSQGVIFVLDSASSEDDLEAARNELHSALQHPQLCTLPFLILANHQDKPAARSVQEIKKYFELEPLARGKRWILQPCSLDDMDALKDSFSQLINLLEEKDHEAVRM.

GTP contacts are provided by residues 39–46 (GLTGSGKT), 82–86 (ELGGA), and 142–145 (NHQD).

Belongs to the small GTPase superfamily. Arf family.

The chain is ADP-ribosylation factor-like protein 15 (ARL15) from Homo sapiens (Human).